The primary structure comprises 340 residues: MQALGIKTEHFIIMCLLSGHAVFTLWYTARVKFEHECVYATTVINGGPVVWGSYNNSLIYVTFVNHSTFLDGLSGYDYSCRENLLSGDTMVKTAISTPLHDKIRIVLGTRNCHAYFWCVQLKMIFFAWFVYGMYLQFRRIRRMFGPFRSSCELISPTSYSLNYVTRVISNILLGYPYTKLARLLCDVSMRRDGMSKVFNADPISFLYMHKGVTLLMLLEVIAHISSGCIVLLTLGVAYTPCALLYPTYIRILAWVVVCTLAIVELISYVRPKPTKDNHLNHINTGGIRGICTTCCATVMSGLAIKCFYIVIFAIAVVIFMHYEQRVQVSLFGESENSQKH.

The first 21 residues, 1–21 (MQALGIKTEHFIIMCLLSGHA), serve as a signal peptide directing secretion. Residues 22–114 (VFTLWYTARV…IVLGTRNCHA (93 aa)) are Extracellular-facing. Asparagine 65 is a glycosylation site (N-linked (GlcNAc...) asparagine; by host). The chain crosses the membrane as a helical span at residues 115 to 135 (YFWCVQLKMIFFAWFVYGMYL). At 136–211 (QFRRIRRMFG…PISFLYMHKG (76 aa)) the chain is on the cytoplasmic side. The chain crosses the membrane as a helical span at residues 212–232 (VTLLMLLEVIAHISSGCIVLL). Residues 233 to 248 (TLGVAYTPCALLYPTY) are Extracellular-facing. Residues 249–269 (IRILAWVVVCTLAIVELISYV) traverse the membrane as a helical segment. Residues 270–298 (RPKPTKDNHLNHINTGGIRGICTTCCATV) are Cytoplasmic-facing. A helical transmembrane segment spans residues 299–319 (MSGLAIKCFYIVIFAIAVVIF). Residues 320–340 (MHYEQRVQVSLFGESENSQKH) are Extracellular-facing.

Belongs to the alphaherpesvirinae glycoprotein K family. As to quaternary structure, interacts (via UL20 interaction region) with protein UL20 homolog (via N-terminus); this interaction probably plays a role in the coordinate transport of protein UL20 homolog and gK to the trans-Golgi network (TGN), and is required for the cell surface expression of gK.

The protein localises to the host cell membrane. It is found in the host endosome membrane. The protein resides in the host Golgi apparatus membrane. Glycoprotein that probably modulates membrane fusion events during secondary envelopment of cytoplasmic capsids that bud into specific trans-Golgi network (TGN)-derived membranes. Also plays a role, together with gB, in virus-induced cell-to-cell fusion (syncytia formation), which is extensive during VZV infection in cultured cells. The protein is Envelope glycoprotein K (gK) of Varicella-zoster virus (strain Dumas) (HHV-3).